A 530-amino-acid polypeptide reads, in one-letter code: 2,3-bisphosphoglycerate-independent phosphoglycerate mutase (530 aa).

The Mn(2+) site is built by Asp-15 and Ser-65. Ser-65 functions as the Phosphoserine intermediate in the catalytic mechanism. Residues His-126, 155 to 156, Arg-187, Arg-193, 257 to 260, and Lys-330 each bind substrate; these read RD and RPDR. Mn(2+)-binding residues include Asp-397, His-401, Asp-438, His-439, and His-456.

The protein belongs to the BPG-independent phosphoglycerate mutase family. In terms of assembly, monomer. Requires Mn(2+) as cofactor.

It catalyses the reaction (2R)-2-phosphoglycerate = (2R)-3-phosphoglycerate. It functions in the pathway carbohydrate degradation; glycolysis; pyruvate from D-glyceraldehyde 3-phosphate: step 3/5. Its function is as follows. Catalyzes the interconversion of 2-phosphoglycerate and 3-phosphoglycerate. The polypeptide is 2,3-bisphosphoglycerate-independent phosphoglycerate mutase (Synechococcus sp. (strain JA-2-3B'a(2-13)) (Cyanobacteria bacterium Yellowstone B-Prime)).